The chain runs to 434 residues: uncharacterized protein (434 aa).

The residue at position 216 (K216) is an N6-(pyridoxal phosphate)lysine.

This is an uncharacterized protein from Schizosaccharomyces pombe (strain 972 / ATCC 24843) (Fission yeast).